A 489-amino-acid chain; its full sequence is MESMFSSPAEAALQREAGMPGLLTPLPDLDRVYELERVAGFVRDLGCERVALQFPDQLLGDAVAVAARLEETTGSKMFILGDTAYGSCCVDVLGAEQAGAQAVIHFGPACLSPPARPLPVTFVLCRRSVALELCVKAFEAQNPDPKAPVVLLSEPACAHALEALATLLRPRYLDLLVSSPAFPLPVGSLSPEPKPLERFGRRFPLAPGRRLEEYGAFYVGGSKASPDPDLDPDLSRLLLGWAPGQPFSSCCPDTGKTQDEGARAGRLRARRRYLVERARDARVVGLLVGTLGVAQHREALAHLRNLTQAAGKRSYVLALGRPTPAKLANFPEVDVFVLLACPLGALAPQLSGSFFQPILAPCELEAACNPAWPPPGLAPHLTHYADLLPGSPFHVPLPPSESELWETPDVSLITGDLRPPPAWKSSNDHGSLALTPRPQLELAESSPAASFLSSRSWQGLEPRLGQTPVTEAVSGRRGIAIAYEDEGSG.

N-acetylmethionine is present on methionine 1. Serine 7 bears the Phosphoserine mark. Cysteine 89, cysteine 110, and cysteine 341 together coordinate [4Fe-4S] cluster. Threonine 435 carries the post-translational modification Phosphothreonine. Phosphoserine is present on residues serine 446 and serine 456. Threonine 467 is modified (phosphothreonine). Serine 488 is modified (phosphoserine).

Belongs to the DPH1/DPH2 family. DPH2 subfamily. Component of the 2-(3-amino-3-carboxypropyl)histidine synthase complex composed of DPH1, DPH2, DPH3 and a NADH-dependent reductase. Interacts with DPH1. The cofactor is [4Fe-4S] cluster.

The protein operates within protein modification; peptidyl-diphthamide biosynthesis. In terms of biological role, required for the first step of diphthamide biosynthesis, a post-translational modification of histidine which occurs in elongation factor 2. DPH1 and DPH2 transfer a 3-amino-3-carboxypropyl (ACP) group from S-adenosyl-L-methionine (SAM) to a histidine residue, the reaction is assisted by a reduction system comprising DPH3 and a NADH-dependent reductase. Facilitates the reduction of the catalytic iron-sulfur cluster found in the DPH1 subunit. The protein is 2-(3-amino-3-carboxypropyl)histidine synthase subunit 2 (DPH2) of Pongo abelii (Sumatran orangutan).